The following is a 600-amino-acid chain: 1-deoxy-D-xylulose-5-phosphate synthase (600 aa).

Thiamine diphosphate is bound by residues His63 and 104–106; that span reads GHS. Asp135 contributes to the Mg(2+) binding site. Thiamine diphosphate contacts are provided by residues 136–137, Asn164, Tyr271, and Glu352; that span reads GA. A Mg(2+)-binding site is contributed by Asn164.

It belongs to the transketolase family. DXPS subfamily. As to quaternary structure, homodimer. The cofactor is Mg(2+). Thiamine diphosphate serves as cofactor.

It catalyses the reaction D-glyceraldehyde 3-phosphate + pyruvate + H(+) = 1-deoxy-D-xylulose 5-phosphate + CO2. Its pathway is metabolic intermediate biosynthesis; 1-deoxy-D-xylulose 5-phosphate biosynthesis; 1-deoxy-D-xylulose 5-phosphate from D-glyceraldehyde 3-phosphate and pyruvate: step 1/1. Its function is as follows. Catalyzes the acyloin condensation reaction between C atoms 2 and 3 of pyruvate and glyceraldehyde 3-phosphate to yield 1-deoxy-D-xylulose-5-phosphate (DXP). The sequence is that of 1-deoxy-D-xylulose-5-phosphate synthase from Campylobacter fetus subsp. fetus (strain 82-40).